Reading from the N-terminus, the 1337-residue chain is C-Jun-amino-terminal kinase-interacting protein 3 (1337 aa).

Residues 12-100 (VVVYQDDYCS…LTQYEREKAL (89 aa)) form the RH1 domain. The segment at 50 to 80 (EVVKELMPLVVNVLENLDSVLSENQEHEVEL) is kinesin-binding domain (KBD); essential for its function in axon elongation. Residues 58-177 (LVVNVLENLD…HTEMIQTYVE (120 aa)) adopt a coiled-coil conformation. Disordered stretches follow at residues 183–211 (KMQQ…SLNV) and 245–285 (SSSY…PSAA). A compositionally biased stretch (polar residues) spans 184–198 (MQQVGGSGQTESSLP). The segment at 210–226 (NVFPLADGMVRAQMGGK) is JNK-binding domain (JBD); essential for its function in axon elongation. Over residues 261–270 (SSAAATPSTT) the composition is skewed to low complexity. A phosphothreonine; by MAPK mark is found at Thr266, Thr276, and Thr287. Residues 271–282 (GTKSNTPTSSVP) show a composition bias toward polar residues. 2 positions are modified to phosphoserine; by ROCK1: Ser315 and Ser365. Ser366 is subject to Phosphoserine. A leucine zipper-like domain (LZ); essential for its function in axon elongation region spans residues 424 to 459 (LLLENSQLLETKNALNVVKNDLIAKVDQLSGEQEVL). The stretch at 437-555 (ALNVVKNDLI…LQEAVRWTEM (119 aa)) forms a coiled coil. Residues 459–515 (LKGELEAAKQAKVKLENRIKELEEELKRVKSEAVTARREPREEVEDVSSYLCTELDK) are interaction with NTRK2. In terms of domain architecture, RH2 spans 521 to 595 (RRRFTRVEMA…SPPPAKRSYP (75 aa)). Residue Ser603 is modified to Phosphoserine. Residues 633-655 (DDCTSSARREQKREQYRQVREHV) form a disordered region. A compositionally biased stretch (basic and acidic residues) spans 639 to 655 (ARREQKREQYRQVREHV). Ser677 carries the phosphoserine modification. Disordered stretches follow at residues 719–772 (WKPH…ATSS) and 859–966 (PRSN…TTTS). The segment covering 739-765 (LTCDREGEGEPKSTHPSPEKKKAKETP) has biased composition (basic and acidic residues). Polar residues-rich tracts occupy residues 879 to 892 (VATT…PSQS) and 941 to 952 (ENGSESNGTIVQ).

It belongs to the JIP scaffold family. Forms homo- or heterooligomeric complexes. The central region of MAPK8IP3 interacts with the C-terminal of MAPK8IP2 but not MAPK8IP1. Binds specific components of the JNK signaling pathway namely MAPK8/JNK1, MAPK9/JNK2 and MAPK10/JNK3 to the N-terminal region, MAP2K4/MKK4 and MAP2K7/MKK7 to the central region and MAP3K11 to the C-terminal region. Binds the TPR motif-containing C-terminal of kinesin light chain, KLC1. Pre-assembled MAPK8IP1 scaffolding complexes are then transported as a cargo of kinesin, to the required subcellular location. Interacts with ROCK1 and this interaction is enhanced by ultraviolet-B (UVB) radiation. Interacts with SH3RF2. Interacts with NTRK2/TRKB and NTRK3/TRKC. In terms of processing, phosphorylation by ROCK1 is crucial for the recruitment of JNK. As to expression, highly expressed throughout many regions of the brain and at lower levels in the heart, liver, lung, testes and kidney. All isoforms have been identified in the brain, isoform 1a is also expressed in the spleen and lung.

It localises to the cytoplasm. Its subcellular location is the golgi apparatus. It is found in the cytoplasmic vesicle. The protein localises to the cell projection. The protein resides in the growth cone. It localises to the axon. Its subcellular location is the dendrite. It is found in the perinuclear region. Functionally, the JNK-interacting protein (JIP) group of scaffold proteins selectively mediates JNK signaling by aggregating specific components of the MAPK cascade to form a functional JNK signaling module. May function as a regulator of vesicle transport, through interactions with the JNK-signaling components and motor proteins. Promotes neuronal axon elongation in a kinesin- and JNK-dependent manner. Activates cofilin at axon tips via local activation of JNK, thereby regulating filopodial dynamics and enhancing axon elongation. Its binding to kinesin heavy chains (KHC), promotes kinesin-1 motility along microtubules and is essential for axon elongation and regeneration. Regulates cortical neuronal migration by mediating NTRK2/TRKB anterograde axonal transport during brain development. Acts as an adapter that bridges the interaction between NTRK2/TRKB and KLC1 and drives NTRK2/TRKB axonal but not dendritic anterograde transport, which is essential for subsequent BDNF-triggered signaling and filopodia formation. This chain is C-Jun-amino-terminal kinase-interacting protein 3 (Mapk8ip3), found in Mus musculus (Mouse).